Consider the following 296-residue polypeptide: MLKVLEGPSLAERTTLRLGGRALAEVRVTSRDALDDLPGVLQCLGGSPLMLGCGSNILAADGELPVVVVSLDMDDAPTIVGETAEGVVVRVGAATRLPRLLGQLASWGLAGLEGLAGIPGSVGGAVAMNAGSYGCEFGTVLRSVEVFSPDFGLADVPHENIEYAYRHFGLKGCHGWFVVTGADIVLRRGESAAITAAMRANYLKKKSTQPVLARSAGCVFRNPAPGVSAGRLIDQAGLRGKRIGGMAFSEVHANFLVNEGAGRSDEAFELLQLAQEIVKRRHGMDLTLEVKILSWL.

Positions 18–189 (LGGRALAEVR…TGADIVLRRG (172 aa)) constitute an FAD-binding PCMH-type domain. Arginine 166 is an active-site residue. Residue cysteine 218 is the Proton donor of the active site. Glutamate 289 is a catalytic residue.

It belongs to the MurB family. FAD is required as a cofactor.

The protein localises to the cytoplasm. The enzyme catalyses UDP-N-acetyl-alpha-D-muramate + NADP(+) = UDP-N-acetyl-3-O-(1-carboxyvinyl)-alpha-D-glucosamine + NADPH + H(+). It functions in the pathway cell wall biogenesis; peptidoglycan biosynthesis. Functionally, cell wall formation. This Nitratidesulfovibrio vulgaris (strain ATCC 29579 / DSM 644 / CCUG 34227 / NCIMB 8303 / VKM B-1760 / Hildenborough) (Desulfovibrio vulgaris) protein is UDP-N-acetylenolpyruvoylglucosamine reductase.